Reading from the N-terminus, the 158-residue chain is 6,7-dimethyl-8-ribityllumazine synthase (158 aa).

5-amino-6-(D-ribitylamino)uracil is bound by residues Phe-23, 61–63 (SFE), and 85–87 (AVI). Residue 90–91 (ET) participates in (2S)-2-hydroxy-3-oxobutyl phosphate binding. The Proton donor role is filled by His-93. 5-amino-6-(D-ribitylamino)uracil is bound at residue Phe-118. Arg-132 is a binding site for (2S)-2-hydroxy-3-oxobutyl phosphate.

This sequence belongs to the DMRL synthase family.

The enzyme catalyses (2S)-2-hydroxy-3-oxobutyl phosphate + 5-amino-6-(D-ribitylamino)uracil = 6,7-dimethyl-8-(1-D-ribityl)lumazine + phosphate + 2 H2O + H(+). The protein operates within cofactor biosynthesis; riboflavin biosynthesis; riboflavin from 2-hydroxy-3-oxobutyl phosphate and 5-amino-6-(D-ribitylamino)uracil: step 1/2. Functionally, catalyzes the formation of 6,7-dimethyl-8-ribityllumazine by condensation of 5-amino-6-(D-ribitylamino)uracil with 3,4-dihydroxy-2-butanone 4-phosphate. This is the penultimate step in the biosynthesis of riboflavin. The sequence is that of 6,7-dimethyl-8-ribityllumazine synthase from Prochlorococcus marinus (strain AS9601).